The following is a 65-amino-acid chain: Small ribosomal subunit protein bS21 (65 aa).

It belongs to the bacterial ribosomal protein bS21 family.

This is Small ribosomal subunit protein bS21 from Aster yellows phytoplasma.